Consider the following 161-residue polypeptide: Regulator of ribonuclease activity A (161 aa).

The protein belongs to the RraA family. As to quaternary structure, homotrimer. Binds to both RNA-binding sites in the C-terminal region of Rne and to RhlB.

The protein resides in the cytoplasm. Globally modulates RNA abundance by binding to RNase E (Rne) and regulating its endonucleolytic activity. Can modulate Rne action in a substrate-dependent manner by altering the composition of the degradosome. Modulates RNA-binding and helicase activities of the degradosome. The polypeptide is Regulator of ribonuclease activity A (Erwinia tasmaniensis (strain DSM 17950 / CFBP 7177 / CIP 109463 / NCPPB 4357 / Et1/99)).